A 301-amino-acid chain; its full sequence is Outer membrane porin G (301 aa).

A signal peptide spans 1–21 (MKKLLPCTALVMCAGMACAQA). 16 beta stranded membrane-spanning segments follow: residues 27–35 (WHFNIGAMY), 47–57 (MDGLAEPSVYF), 64–72 (WRIALAYYQ), 89–98 (RPELEVHYQF), 104–112 (FSFGLTGGF), 129–136 (NMQRWKIA), 149–158 (FNGWLSMYKF), 172–182 (VETETGLQYTF), 186–195 (VALRVNYYLE), 201–209 (DDSRNNGEF), 213–222 (EIRAYLPLTL), 230–238 (YTRIGLDRW), 240–248 (NWDWQDDIE), 254–265 (FNRVGLFYGYDF), 269–279 (LSVSLEYAFEW), and 289–300 (KFHYAGVGVNYS).

In terms of assembly, monomer.

It is found in the cell outer membrane. In terms of biological role, forms channels functionally larger than those of classical porins. Functionally, may act as a regulator of the RCS-phosphorelay signal transduction pathway. This Escherichia coli (strain K12) protein is Outer membrane porin G (ompG).